Here is a 208-residue protein sequence, read N- to C-terminus: Small ribosomal subunit protein uS5 (208 aa).

The segment at 1-38 (MPGRERRDGGRSADDNQKKNDRRGGRRDDRRNQQQDER) is disordered. The region spanning 41–104 (YIERVVTINR…EEARKNFFRV (64 aa)) is the S5 DRBM domain.

Belongs to the universal ribosomal protein uS5 family. In terms of assembly, part of the 30S ribosomal subunit. Contacts proteins S4 and S8.

Functionally, with S4 and S12 plays an important role in translational accuracy. Its function is as follows. Located at the back of the 30S subunit body where it stabilizes the conformation of the head with respect to the body. This chain is Small ribosomal subunit protein uS5, found in Corynebacterium diphtheriae (strain ATCC 700971 / NCTC 13129 / Biotype gravis).